Reading from the N-terminus, the 95-residue chain is IgNAR transmembrane form NE (95 aa).

Residues 1–36 form the Ig-like domain; sequence LTFSTRSLLNLPAVEWKSGAKYTCTASHSPSQSTVK. The segment covering 24-35 has biased composition (polar residues); the sequence is CTASHSPSQSTV. The tract at residues 24–79 is disordered; it reads CTASHSPSQSTVKRVIRNPKESPKGSSETRKSPLEIMESPEDYGTEEDQLENVNED. Over residues 41–56 the composition is skewed to basic and acidic residues; that stretch reads NPKESPKGSSETRKSP. Residues 61-77 are compositionally biased toward acidic residues; sequence ESPEDYGTEEDQLENVN. N-linked (GlcNAc...) asparagine glycosylation is present at asparagine 81.

Expressed mainly in lymphoid tissues including spleen, epigonal organ and circulating lymphocytes. Also expressed at low levels in the pancreas.

The protein is IgNAR transmembrane form NE of Ginglymostoma cirratum (Nurse shark).